Reading from the N-terminus, the 374-residue chain is Diels-Alderase fsa2 (374 aa).

The interval 1 to 216 (MSNVTVSAFT…MDRVWSPLSW (216 aa)) is beta-sandwich motif. Residues 216-374 (WPQVMTESYY…VGTGGQCELS (159 aa)) are beta-barrel motif.

Belongs to the Diels-Alderase family.

The catalysed reaction is (5S)-3-[(2E,6R,8E,10E,12E)-2,6-dimethyltetradeca-2,8,10,12-tetraenoyl]-5-(hydroxymethyl)pyrrolidine-2,4-dione = trichosetin. The protein operates within mycotoxin biosynthesis. Functionally, diels-Alderase; part of the gene cluster that mediates the biosynthesis of the HIV-1 integrase inhibitor equisetin and of fusarisetin A, both trans-fused decalin-containing tetramic acids showing also antimicrobial activity. The PKS module of fsa1 together with the enoylreductase fsa3 catalyze the formation of the polyketide unit which is then conjugated to L-serine by the condensation domain of the fsa1 NRPS module. Activity of the Dieckmann cyclase domain (RED) results in release of the Dieckmann product intermediate. Diels-Alderase fsa2 is involved in endo-selective Diels-Alder cycloaddition to form the decalin ring, leading to the production of N-desmethylequisetin also called trichosetin. Subsequent N-methylation is carried out by fsa4 to give equisetin. The enzymatic gene responsible for the conversion of equisetin to fusarisetin A has not been identified yet and is probably located outside of the fsa cluster. The polypeptide is Diels-Alderase fsa2 (Fusarium sp. (strain FN080326)).